A 203-amino-acid polypeptide reads, in one-letter code: Probable metallo-hydrolase MJ0296 (203 aa).

His86, His88, Asp90, His91, His135, Asp152, and His193 together coordinate Zn(2+).

This sequence belongs to the metallo-beta-lactamase superfamily. Zn(2+) is required as a cofactor.

The sequence is that of Probable metallo-hydrolase MJ0296 from Methanocaldococcus jannaschii (strain ATCC 43067 / DSM 2661 / JAL-1 / JCM 10045 / NBRC 100440) (Methanococcus jannaschii).